The sequence spans 112 residues: Ribosome-binding factor A (112 aa).

It belongs to the RbfA family. As to quaternary structure, monomer. Binds 30S ribosomal subunits, but not 50S ribosomal subunits or 70S ribosomes.

The protein localises to the cytoplasm. Functionally, one of several proteins that assist in the late maturation steps of the functional core of the 30S ribosomal subunit. Associates with free 30S ribosomal subunits (but not with 30S subunits that are part of 70S ribosomes or polysomes). Required for efficient processing of 16S rRNA. May interact with the 5'-terminal helix region of 16S rRNA. This is Ribosome-binding factor A from Ruthia magnifica subsp. Calyptogena magnifica.